The sequence spans 227 residues: MGGKLSKKKKGYNVNDEKAKDKDKKAEGAGTEEEGTPKENEAQAAAETPEVKEGKEEKPEKDAQDTTKPEDKEGEKDAEAAKEDAPKAEPEPTEGAEGKPEPPKDAEQEPAAASGPSTGGDAPKASEAEAAEPAAPTKDDKSKEGGDATKTEAPAAPAAQETKSDGAPASDSKPSSTEAAPSSKETPAATEAPSSTPKAQAPAAPADEVKPAETPAANSDQTVAVKE.

Positions 1–11 are enriched in basic residues; the sequence is MGGKLSKKKKG. The disordered stretch occupies residues 1–227; sequence MGGKLSKKKK…NSDQTVAVKE (227 aa). The N-myristoyl glycine moiety is linked to residue glycine 2. The segment covering 15–27 has biased composition (basic and acidic residues); sequence NDEKAKDKDKKAE. Residue lysine 25 forms a Glycyl lysine isopeptide (Lys-Gly) (interchain with G-Cter in SUMO2) linkage. Residues threonine 31 and threonine 36 each carry the phosphothreonine modification. Composition is skewed to basic and acidic residues over residues 49-107 and 137-150; these read PEVK…KDAE and TKDDKSKEGGDATK. Glycyl lysine isopeptide (Lys-Gly) (interchain with G-Cter in SUMO2) cross-links involve residues lysine 87 and lysine 99. The segment covering 151–161 has biased composition (low complexity); sequence TEAPAAPAAQE. Residue lysine 163 forms a Glycyl lysine isopeptide (Lys-Gly) (interchain with G-Cter in SUMO2) linkage. Phosphoserine is present on residues serine 164, serine 170, serine 172, serine 176, and serine 195. Over residues 172–185 the composition is skewed to polar residues; it reads SKPSSTEAAPSSKE. Phosphothreonine is present on threonine 196. The span at 216 to 227 shows a compositional bias: polar residues; it reads AANSDQTVAVKE. Phosphoserine is present on serine 219.

Belongs to the BASP1 family. Brain.

The protein resides in the cell membrane. The protein localises to the cell projection. It is found in the growth cone. The polypeptide is Brain acid soluble protein 1 (BASP1) (Bos taurus (Bovine)).